Consider the following 399-residue polypeptide: Elongation factor Tu (399 aa).

The tr-type G domain occupies 10 to 204; sequence KPHVNIGTIG…AVDANIPEPE (195 aa). A G1 region spans residues 19-26; the sequence is GHVDHGKT. A GTP-binding site is contributed by 19-26; it reads GHVDHGKT. Thr-26 lines the Mg(2+) pocket. Positions 60-64 are G2; the sequence is GITIN. The interval 81 to 84 is G3; it reads DCPG. Residues 81–85 and 136–139 contribute to the GTP site; these read DCPGH and NKCD. Positions 136–139 are G4; the sequence is NKCD. Residues 174–176 form a G5 region; that stretch reads SGL.

The protein belongs to the TRAFAC class translation factor GTPase superfamily. Classic translation factor GTPase family. EF-Tu/EF-1A subfamily. Monomer.

It is found in the cytoplasm. It catalyses the reaction GTP + H2O = GDP + phosphate + H(+). In terms of biological role, GTP hydrolase that promotes the GTP-dependent binding of aminoacyl-tRNA to the A-site of ribosomes during protein biosynthesis. The sequence is that of Elongation factor Tu from Synechococcus sp. (strain WH7803).